The chain runs to 436 residues: Antilisterial bacteriocin subtilosin biosynthesis protein AlbD (436 aa).

Helical transmembrane passes span 27–47 (IAAGLVILAVFEIGLIRQAGI), 51–71 (VLGKTYIILALLLMNTYMVFL), 112–132 (TLFFFILPLFLFGNGTLSGAQ), 134–154 (LFWLGRFSFFTVYSILFGVML), 166–186 (FLLHAAVFAFVCLSAAFMPAV), 187–207 (TIPLCAVHMLWAVIIDFPVFL), 240–260 (AMLLNYVVMAAFSGFFSFQMM), 270–290 (IYIVISALLLICSPIALLYSI), 315–335 (FYSGLLAGGFLLVAIIVGFIS), and 395–415 (ATLAGTAVSLAVIPIAALIIV).

The protein resides in the cell membrane. Functionally, involved in the production of the bacteriocin subtilosin. Required for immunity to subtilosin. In Bacillus subtilis, this protein is Antilisterial bacteriocin subtilosin biosynthesis protein AlbD (albD).